We begin with the raw amino-acid sequence, 544 residues long: Chaperonin GroEL 2 (544 aa).

Residues 29-32 (TLGP), 86-90 (DGTTT), Gly413, 479-481 (NAA), and Asp495 each bind ATP.

This sequence belongs to the chaperonin (HSP60) family. As to quaternary structure, forms a cylinder of 14 subunits composed of two heptameric rings stacked back-to-back. Interacts with the co-chaperonin GroES.

It is found in the cytoplasm. It carries out the reaction ATP + H2O + a folded polypeptide = ADP + phosphate + an unfolded polypeptide.. In terms of biological role, together with its co-chaperonin GroES, plays an essential role in assisting protein folding. The GroEL-GroES system forms a nano-cage that allows encapsulation of the non-native substrate proteins and provides a physical environment optimized to promote and accelerate protein folding. In Synechococcus sp. (strain WH7803), this protein is Chaperonin GroEL 2.